The primary structure comprises 134 residues: DNA-binding protein H-NS (134 aa).

A DNA-binding region spans residues 111-116 (QGRTLA).

It belongs to the histone-like protein H-NS family. As to quaternary structure, homodimer that oligomerizes on DNA into higher-order complexes that form bridges between disparate regions of DNA compacting it. Interacts with YmoA and other similar proteins.

The protein resides in the cytoplasm. It is found in the nucleoid. Functionally, a DNA-binding protein implicated in transcriptional repression and chromosome organization and compaction. Binds nucleation sites in AT-rich DNA and bridges them, forming higher-order nucleoprotein complexes and condensing the chromosome. As many horizontally transferred genes are AT-rich, it plays a central role in silencing foreign genes. A subset of genes are repressed by H-NS in association with other proteins. The protein is DNA-binding protein H-NS (hns) of Proteus vulgaris.